Consider the following 297-residue polypeptide: Calponin-1 (297 aa).

The region spanning 28–131 (HQREQELREW…STLLALASMA (104 aa)) is the Calponin-homology (CH) domain. Calponin-like repeat units follow at residues 164-189 (IGLQ…RHLY), 204-229 (ISLQ…RQIF), and 243-268 (VSLQ…RQVY). The residue at position 170 (Thr-170) is a Phosphothreonine; by ROCK2. At Ser-175 the chain carries Phosphoserine; by ROCK2. Phosphothreonine; by ROCK2 occurs at positions 180 and 184. The residue at position 259 (Thr-259) is a Phosphothreonine; by ROCK2.

Belongs to the calponin family. In terms of assembly, part of cGMP kinase signaling complex at least composed of ACTA2/alpha-actin, CNN1/calponin H1, PLN/phospholamban, PRKG1 and ITPR1.

Thin filament-associated protein that is implicated in the regulation and modulation of smooth muscle contraction. It is capable of binding to actin, calmodulin and tropomyosin. The interaction of calponin with actin inhibits the actomyosin Mg-ATPase activity. This chain is Calponin-1 (CNN1), found in Ovis aries (Sheep).